Consider the following 229-residue polypeptide: C-type lectin domain family 1 member B (229 aa).

The Cytoplasmic portion of the chain corresponds to 1 to 33; that stretch reads MQDEDGYITLNIKTRKPALISVGSASSSWWRVM. The residue at position 7 (tyrosine 7) is a Phosphotyrosine. An ITAM motif is present at residues 7 to 10; it reads YITL. Residues 34-54 form a helical; Signal-anchor for type II membrane protein membrane-spanning segment; sequence ALILLILCVGMVVGLVALGIW. The Extracellular portion of the chain corresponds to 55-229; sequence SVMQRNYLQG…AGMTKVDQLP (175 aa). N-linked (GlcNAc...) asparagine glycosylation occurs at asparagine 68. A disulfide bridge links cysteine 102 with cysteine 113. Positions 109–217 constitute a C-type lectin domain; it reads YGDSCYGFFR…CENKHYLMCE (109 aa). Residues asparagine 120 and asparagine 134 are each glycosylated (N-linked (GlcNAc...) asparagine). 2 cysteine pairs are disulfide-bonded: cysteine 130–cysteine 216 and cysteine 195–cysteine 208.

As to quaternary structure, homodimer. Interacts (via cytoplasmic domain) with RACK1; promotes CLEC1B ubiquitination and proteasome-mediated degradation. Interacts (dimer) with SYK (via SH2 domains). Interacts with PDPN; the interaction is independent of CLEC1B glycosylation and activates CLEC1B. In terms of processing, glycosylated. Phosphorylated on tyrosine residue in response to rhodocytin binding. In terms of tissue distribution, expressed preferentially in the liver. Also expressed in immune cells of myeloid origin and on the surface of platelets.

It is found in the membrane. Functionally, C-type lectin-like receptor that functions as a platelet receptor for the lymphatic endothelial marker, PDPN. After ligand activation, signals via sequential activation of SRC and SYK tyrosine kinases leading to activation of PLCG2. Its function is as follows. (Microbial infection) Acts as a receptor for the platelet-aggregating snake venom protein rhodocytin. Rhodocytin binding leads to tyrosine phosphorylation and this promotes the binding of spleen tyrosine kinase (SYK) and initiation of downstream tyrosine phosphorylation events and activation of PLCG2. (Microbial infection) Acts as an attachment factor for Human immunodeficiency virus type 1 (HIV-1) and facilitates its capture by platelets. In Homo sapiens (Human), this protein is C-type lectin domain family 1 member B (CLEC1B).